A 483-amino-acid polypeptide reads, in one-letter code: Probable zinc metalloprotease PTT_08196 (483 aa).

Residues 1 to 18 (MLFRSVILSNALLLPACA) form the signal peptide. N-linked (GlcNAc...) asparagine glycosylation is found at asparagine 96 and asparagine 121. Positions 167, 187, and 220 each coordinate Zn(2+). Asparagine 235 carries N-linked (GlcNAc...) asparagine glycosylation. Aspartate 247 contributes to the Zn(2+) binding site. Asparagine 310, asparagine 362, asparagine 401, asparagine 411, and asparagine 421 each carry an N-linked (GlcNAc...) asparagine glycan. The region spanning 396–483 (PAMPRNVTID…KSPAVYPFPA (88 aa)) is the Fibronectin type-III domain.

This sequence belongs to the peptidase M28 family. M28B subfamily. Zn(2+) serves as cofactor.

It localises to the secreted. In Pyrenophora teres f. teres (strain 0-1) (Barley net blotch fungus), this protein is Probable zinc metalloprotease PTT_08196.